A 144-amino-acid polypeptide reads, in one-letter code: Nucleoside diphosphate kinase (144 aa).

The ATP site is built by Lys-9, Phe-57, Arg-85, Thr-91, Arg-102, and Asn-112. His-115 (pros-phosphohistidine intermediate) is an active-site residue.

It belongs to the NDK family. In terms of assembly, homotetramer. The cofactor is Mg(2+).

Its subcellular location is the cytoplasm. The enzyme catalyses a 2'-deoxyribonucleoside 5'-diphosphate + ATP = a 2'-deoxyribonucleoside 5'-triphosphate + ADP. The catalysed reaction is a ribonucleoside 5'-diphosphate + ATP = a ribonucleoside 5'-triphosphate + ADP. Functionally, major role in the synthesis of nucleoside triphosphates other than ATP. The ATP gamma phosphate is transferred to the NDP beta phosphate via a ping-pong mechanism, using a phosphorylated active-site intermediate. The protein is Nucleoside diphosphate kinase of Chlamydia pneumoniae (Chlamydophila pneumoniae).